A 251-amino-acid chain; its full sequence is Protein FAM216A (251 aa).

Residues 1–16 are compositionally biased toward polar residues; that stretch reads MPNQGPVSDWTECSSS. A disordered region spans residues 1 to 49; it reads MPNQGPVSDWTECSSSAEPPAVARAEGGGGGSAGHSYYQNSKDRIKDGH.

The protein belongs to the FAM216 family.

This Bos taurus (Bovine) protein is Protein FAM216A (FAM216A).